A 1201-amino-acid polypeptide reads, in one-letter code: Potassium channel subfamily T member 1 (1201 aa).

Residues 1–28 form a disordered region; the sequence is MARAKLKNSPSESNSHVKTVPPATTEDV. Topologically, residues 1–92 are cytoplasmic; it reads MARAKLKNSP…FFIKNQRSSL (92 aa). Residues 8–17 are compositionally biased toward polar residues; the sequence is NSPSESNSHV. The helical transmembrane segment at 93 to 115 threads the bilayer; sequence RIRLFNFSLKLLTCLLYIVRVLL. At 116 to 152 the chain is on the extracellular side; that stretch reads DNPEEGIGCWECEKQNYTLFNQSTKINWSHIFWVDRK. N-linked (GlcNAc...) asparagine glycans are attached at residues Asn131 and Asn136. The helical transmembrane segment at 153–175 threads the bilayer; that stretch reads LPLWAVQVSIALISFLETMLLIY. Residues 176 to 184 lie on the Cytoplasmic side of the membrane; that stretch reads LSYKGNIWE. The chain crosses the membrane as a helical span at residues 185-206; that stretch reads QIFRISFILEMINTVPFIITIF. The Extracellular portion of the chain corresponds to 207–216; sequence WPPLRNLFIP. A helical membrane pass occupies residues 217–229; the sequence is VFLNCWLAKYALE. The Cytoplasmic portion of the chain corresponds to 230-249; sequence NMINDLHRAIQRTQSAMFNQ. Residues 250-272 form a helical membrane-spanning segment; the sequence is VLILICTLLCLVFTGTCGIQHLE. At 273–279 the chain is on the extracellular side; it reads RAGEKLS. The pore-forming intramembrane region spans 280-300; that stretch reads LFKSFYFCIVTFSTVGYGDVT. Positions 294 and 295 each coordinate K(+). At 301-304 the chain is on the extracellular side; sequence PKIW. A helical membrane pass occupies residues 305 to 326; that stretch reads PSQLLVVIMICVALVVLPLQFE. Residues 327 to 1201 lie on the Cytoplasmic side of the membrane; the sequence is ELVYLWMERQ…NPETRDETQL (875 aa). The region spanning 350–486 is the RCK N-terminal 1 domain; the sequence is EKHVVLCVSS…FHVKFADHVV (137 aa). Residues Leu511, His514, Ser536, and Asn538 each contribute to the Na(+) site. Zn(2+) contacts are provided by Cys750 and Cys751. K(+) is bound by residues Arg753 and Lys756. 2 residues coordinate Na(+): Arg753 and Lys756. Cys758 and His760 together coordinate Zn(2+). The K(+) site is built by Asn761, Tyr769, and Gly770. Na(+) is bound at residue Phe771. The RCK N-terminal 2 domain maps to 773–913; it reads NKLIIVSAET…QFRAKDSYSL (141 aa). Residues Ser779, Leu810, Asp812, Gly834, and Asp857 each contribute to the K(+) site. Positions 1175-1201 are disordered; the sequence is NDGHSRKSSCSNKLGPCNPETRDETQL.

It belongs to the potassium channel family. Calcium-activated (TC 1.A.1.3) subfamily. KCa4.1/KCNT1 sub-subfamily. In terms of assembly, homotetramer; which constitutes the Na(+)-activated K(+) channel. Interacts with KCNT2; these heterodimer channels differ from the homomers in their unitary conductance, kinetic behavior, subcellular localization, and response to activation of protein kinase C. Post-translationally, phosphorylated by protein kinase C. Phosphorylation of the C-terminal domain increases channel activity.

The protein resides in the cell membrane. The catalysed reaction is K(+)(in) = K(+)(out). With respect to regulation, activated by high intracellular Na(+). In addition to activation by Na(+), is cooperatively activated by intracellular Cl(-) levels. Inhibited by Zn(2+). Activated upon stimulation of G-protein coupled receptors, such as CHRM1 and GRIA1. Its function is as follows. Sodium-activated K(+) channel. Acts as an important mediator of neuronal membrane excitability. Contributes to the delayed outward currents. Regulates of neuronal bursting in sensory neurons. Contributes to synaptic development and plasticity. The sequence is that of Potassium channel subfamily T member 1 (KCNT1) from Gallus gallus (Chicken).